The sequence spans 417 residues: uncharacterized protein (417 aa).

Disordered stretches follow at residues 44 to 83 (FTNE…VRSR) and 325 to 346 (VQSA…PPKE). Residues 54–64 (SNYSTSGYDSS) show a composition bias toward low complexity. Residues 65-76 (AETISANSSPIN) are compositionally biased toward polar residues. Residues 326–339 (QSARKNQKKGRKNR) are compositionally biased toward basic residues. A helical membrane pass occupies residues 362–382 (FLIIGVYVLVFIYVCTNVLTV).

It is found in the membrane. This is an uncharacterized protein from Caenorhabditis elegans.